Here is a 215-residue protein sequence, read N- to C-terminus: MKQNRKNLPIILASSSPARIELLNRIKIIPSQIIPADIDETPNLRELPAPLAIRLAYEKAIKIASQIEESAIIIAADTVAAVGRRILPKATTYEEVKNCIKMLSGRRHRVYTGLCIIKKENDQLTVRQKIVQTIVKFKKLSDEEINFYCSLDEGIDKAGGCKISGYAEAFISFISGSYSNVMGLPLFETVNALTSLGFRCSSIMPAKMNYCHSAT.

Asp77 serves as the catalytic Proton acceptor.

This sequence belongs to the Maf family. Requires a divalent metal cation as cofactor.

The protein localises to the cytoplasm. It carries out the reaction a ribonucleoside 5'-triphosphate + H2O = a ribonucleoside 5'-phosphate + diphosphate + H(+). The catalysed reaction is a 2'-deoxyribonucleoside 5'-triphosphate + H2O = a 2'-deoxyribonucleoside 5'-phosphate + diphosphate + H(+). Its function is as follows. Nucleoside triphosphate pyrophosphatase. May have a dual role in cell division arrest and in preventing the incorporation of modified nucleotides into cellular nucleic acids. This chain is Nucleoside triphosphate pyrophosphatase, found in Rickettsia peacockii (strain Rustic).